The chain runs to 210 residues: Ribosomal RNA large subunit methyltransferase E (210 aa).

5 residues coordinate S-adenosyl-L-methionine: Gly64, Trp66, Asp84, Asp100, and Asp125. Lys165 functions as the Proton acceptor in the catalytic mechanism.

It belongs to the class I-like SAM-binding methyltransferase superfamily. RNA methyltransferase RlmE family.

The protein resides in the cytoplasm. The enzyme catalyses uridine(2552) in 23S rRNA + S-adenosyl-L-methionine = 2'-O-methyluridine(2552) in 23S rRNA + S-adenosyl-L-homocysteine + H(+). In terms of biological role, specifically methylates the uridine in position 2552 of 23S rRNA at the 2'-O position of the ribose in the fully assembled 50S ribosomal subunit. This Chromohalobacter salexigens (strain ATCC BAA-138 / DSM 3043 / CIP 106854 / NCIMB 13768 / 1H11) protein is Ribosomal RNA large subunit methyltransferase E.